The following is a 295-amino-acid chain: Mycothiol acetyltransferase (295 aa).

2 consecutive N-acetyltransferase domains span residues 4–138 (TEWR…RPLT) and 149–295 (VRIA…YAAN). Asp-36 contacts 1D-myo-inositol 2-(L-cysteinylamino)-2-deoxy-alpha-D-glucopyranoside. Residues 77-79 (LVV) and 85-90 (RRGIGA) each bind acetyl-CoA. 3 residues coordinate 1D-myo-inositol 2-(L-cysteinylamino)-2-deoxy-alpha-D-glucopyranoside: Glu-176, Lys-217, and Glu-225. Residues 229–231 (VGV) and 236–242 (QGRGLGY) contribute to the acetyl-CoA site. Position 266 (Tyr-266) interacts with 1D-myo-inositol 2-(L-cysteinylamino)-2-deoxy-alpha-D-glucopyranoside. 271–276 (NSAAVN) lines the acetyl-CoA pocket.

It belongs to the acetyltransferase family. MshD subfamily. In terms of assembly, monomer.

The catalysed reaction is 1D-myo-inositol 2-(L-cysteinylamino)-2-deoxy-alpha-D-glucopyranoside + acetyl-CoA = mycothiol + CoA + H(+). Catalyzes the transfer of acetyl from acetyl-CoA to desacetylmycothiol (Cys-GlcN-Ins) to form mycothiol. This Mycolicibacterium smegmatis (strain ATCC 700084 / mc(2)155) (Mycobacterium smegmatis) protein is Mycothiol acetyltransferase (mshD).